The sequence spans 343 residues: ATPase GET3 (343 aa).

ATP is bound at residue lysine 32–threonine 39. The active site involves aspartate 61. Positions 245 and 272 each coordinate ATP. Zn(2+) is bound by residues cysteine 283 and cysteine 286.

It belongs to the arsA ATPase family. Homodimer.

The protein resides in the cytoplasm. The protein localises to the endoplasmic reticulum. Its function is as follows. ATPase required for the post-translational delivery of tail-anchored (TA) proteins to the endoplasmic reticulum. Recognizes and selectively binds the transmembrane domain of TA proteins in the cytosol. This complex then targets to the endoplasmic reticulum by membrane-bound receptors, where the tail-anchored protein is released for insertion. This process is regulated by ATP binding and hydrolysis. ATP binding drives the homodimer towards the closed dimer state, facilitating recognition of newly synthesized TA membrane proteins. ATP hydrolysis is required for insertion. Subsequently, the homodimer reverts towards the open dimer state, lowering its affinity for the membrane-bound receptor, and returning it to the cytosol to initiate a new round of targeting. In Pyricularia oryzae (strain 70-15 / ATCC MYA-4617 / FGSC 8958) (Rice blast fungus), this protein is ATPase GET3.